A 248-amino-acid chain; its full sequence is UDP-2,3-diacylglucosamine hydrolase (248 aa).

The Mn(2+) site is built by aspartate 8, histidine 10, aspartate 41, asparagine 79, and histidine 114. A substrate-binding site is contributed by 79–80; that stretch reads NR. Substrate-binding residues include aspartate 122, serine 160, aspartate 171, glutamine 174, and histidine 202. Mn(2+) is bound by residues histidine 202 and histidine 204.

Belongs to the LpxH family. Mn(2+) is required as a cofactor.

Its subcellular location is the cell inner membrane. The enzyme catalyses UDP-2-N,3-O-bis[(3R)-3-hydroxytetradecanoyl]-alpha-D-glucosamine + H2O = 2-N,3-O-bis[(3R)-3-hydroxytetradecanoyl]-alpha-D-glucosaminyl 1-phosphate + UMP + 2 H(+). The protein operates within glycolipid biosynthesis; lipid IV(A) biosynthesis; lipid IV(A) from (3R)-3-hydroxytetradecanoyl-[acyl-carrier-protein] and UDP-N-acetyl-alpha-D-glucosamine: step 4/6. Functionally, hydrolyzes the pyrophosphate bond of UDP-2,3-diacylglucosamine to yield 2,3-diacylglucosamine 1-phosphate (lipid X) and UMP by catalyzing the attack of water at the alpha-P atom. Involved in the biosynthesis of lipid A, a phosphorylated glycolipid that anchors the lipopolysaccharide to the outer membrane of the cell. In Stenotrophomonas maltophilia (strain K279a), this protein is UDP-2,3-diacylglucosamine hydrolase.